The sequence spans 306 residues: Protein-methionine-sulfoxide reductase catalytic subunit MsrP (306 aa).

Residues 1–44 constitute a signal peptide (tat-type signal); sequence MLIRHAPDLTDNDVTGHGLYLRRRDFIGGAAGLGLMAAAGSASA. Mo-molybdopterin contacts are provided by residues asparagine 69, 72-73, cysteine 127, threonine 162, asparagine 210, arginine 215, and 226-228; these read YE and GIK.

This sequence belongs to the MsrP family. In terms of assembly, heterodimer of a catalytic subunit (MsrP) and a heme-binding subunit (MsrQ). Mo-molybdopterin is required as a cofactor. Predicted to be exported by the Tat system. The position of the signal peptide cleavage has not been experimentally proven.

The protein localises to the periplasm. The catalysed reaction is L-methionyl-[protein] + a quinone + H2O = L-methionyl-(S)-S-oxide-[protein] + a quinol. It carries out the reaction L-methionyl-[protein] + a quinone + H2O = L-methionyl-(R)-S-oxide-[protein] + a quinol. Functionally, part of the MsrPQ system that repairs oxidized periplasmic proteins containing methionine sulfoxide residues (Met-O), using respiratory chain electrons. Thus protects these proteins from oxidative-stress damage caused by reactive species of oxygen and chlorine generated by the host defense mechanisms. MsrPQ is essential for the maintenance of envelope integrity under bleach stress, rescuing a wide series of structurally unrelated periplasmic proteins from methionine oxidation. The catalytic subunit MsrP is non-stereospecific, being able to reduce both (R-) and (S-) diastereoisomers of methionine sulfoxide. This chain is Protein-methionine-sulfoxide reductase catalytic subunit MsrP, found in Caulobacter sp. (strain K31).